We begin with the raw amino-acid sequence, 294 residues long: Glycine--tRNA ligase alpha subunit (294 aa).

The protein belongs to the class-II aminoacyl-tRNA synthetase family. Tetramer of two alpha and two beta subunits.

It localises to the cytoplasm. The enzyme catalyses tRNA(Gly) + glycine + ATP = glycyl-tRNA(Gly) + AMP + diphosphate. This is Glycine--tRNA ligase alpha subunit from Sulfurovum sp. (strain NBC37-1).